Consider the following 290-residue polypeptide: Small ribosomal subunit biogenesis GTPase RsgA (290 aa).

One can recognise a CP-type G domain in the interval 62–213 (KNSLVRPPIV…IADTPGFSSL (152 aa)). Residues 111-114 (SKMD) and 156-164 (GQTGVGKST) contribute to the GTP site. Zn(2+)-binding residues include C237, C242, H244, and C250.

This sequence belongs to the TRAFAC class YlqF/YawG GTPase family. RsgA subfamily. In terms of assembly, monomer. Associates with 30S ribosomal subunit, binds 16S rRNA. The cofactor is Zn(2+).

It localises to the cytoplasm. In terms of biological role, one of several proteins that assist in the late maturation steps of the functional core of the 30S ribosomal subunit. Helps release RbfA from mature subunits. May play a role in the assembly of ribosomal proteins into the subunit. Circularly permuted GTPase that catalyzes slow GTP hydrolysis, GTPase activity is stimulated by the 30S ribosomal subunit. This is Small ribosomal subunit biogenesis GTPase RsgA from Streptococcus pyogenes serotype M3 (strain ATCC BAA-595 / MGAS315).